A 509-amino-acid chain; its full sequence is Protein WHAT'S THIS FACTOR 1 homolog, chloroplastic (509 aa).

The N-terminal 56 residues, 1 to 56 (MDAKLLLLPFPSPPATLHHHPPPPKSLFLGASLPLLHPPPPLRLLRPGAPRRLAVV), are a transit peptide targeting the chloroplast. The 329-residue stretch at 65-393 (KEIPFDNVIQ…LKEKMRALVA (329 aa)) folds into the PORR domain. 2 disordered regions span residues 402–431 (VPAT…DEDE) and 444–509 (SGGK…RERW). Residues 461–474 (ENDDSPPDFEDDDG) are compositionally biased toward acidic residues.

It is found in the plastid. The protein resides in the chloroplast. Functionally, RNA-binding protein involved in group II intron splicing. Binds specific group II introns and promotes their splicing. Functions in the context of a heterodimer with the ribonuclease III domain-containing protein RNC1. The chain is Protein WHAT'S THIS FACTOR 1 homolog, chloroplastic from Oryza sativa subsp. japonica (Rice).